We begin with the raw amino-acid sequence, 482 residues long: Immune evasion protein OPG047 (482 aa).

Residues 20 to 90 enclose the BTB domain; it reads KKFKTIIEAI…SYTGKVYIDS (71 aa). Positions 125–222 constitute a BACK domain; sequence CIECYMMGIE…SNYLSPRGIH (98 aa). Kelch repeat units lie at residues 273–319, 320–363, 365–408, 410–447, and 448–482; these read VVYL…PANN, KLYV…SINN, IYVM…VFGR, LFLV…IVDN, and KLLL…GMEW.

This sequence belongs to the orthopoxvirus OPG047 family.

In terms of biological role, might have a role in the suppression of host immune response. The polypeptide is Immune evasion protein OPG047 (OPG047) (Cynomys gunnisoni (Gunnison's prairie dog)).